We begin with the raw amino-acid sequence, 940 residues long: Inter-alpha-trypsin inhibitor heavy chain H5 (940 aa).

The N-terminal stretch at M1–G16 is a signal peptide. Residues V35–E161 enclose the VIT domain. N97 and N127 each carry an N-linked (GlcNAc...) asparagine glycan. 2 disordered regions span residues K117–K136 and S208–V227. N231 carries N-linked (GlcNAc...) asparagine glycosylation. A VWFA domain is found at N295–I478. A disordered region spans residues D405 to L432. Residues W407–P417 are compositionally biased toward basic and acidic residues. An N-linked (GlcNAc...) asparagine glycan is attached at N508. The interval P541 to N571 is disordered. N-linked (GlcNAc...) asparagine glycosylation is found at N774, N793, and N860.

The protein belongs to the ITIH family.

The protein localises to the secreted. Its function is as follows. May act as a tumor suppressor. The chain is Inter-alpha-trypsin inhibitor heavy chain H5 (ITIH5) from Pongo abelii (Sumatran orangutan).